A 308-amino-acid polypeptide reads, in one-letter code: Porphobilinogen deaminase (308 aa).

Cysteine 241 carries the post-translational modification S-(dipyrrolylmethanemethyl)cysteine.

It belongs to the HMBS family. In terms of assembly, monomer. Dipyrromethane serves as cofactor.

The catalysed reaction is 4 porphobilinogen + H2O = hydroxymethylbilane + 4 NH4(+). Its pathway is porphyrin-containing compound metabolism; protoporphyrin-IX biosynthesis; coproporphyrinogen-III from 5-aminolevulinate: step 2/4. Functionally, tetrapolymerization of the monopyrrole PBG into the hydroxymethylbilane pre-uroporphyrinogen in several discrete steps. The protein is Porphobilinogen deaminase of Staphylococcus aureus (strain Mu50 / ATCC 700699).